A 218-amino-acid chain; its full sequence is ATP-dependent Clp protease proteolytic subunit 2 (218 aa).

The active-site Nucleophile is Ser-114. His-139 is a catalytic residue.

Belongs to the peptidase S14 family. Fourteen ClpP subunits assemble into 2 heptameric rings which stack back to back to give a disk-like structure with a central cavity, resembling the structure of eukaryotic proteasomes.

It is found in the cytoplasm. The catalysed reaction is Hydrolysis of proteins to small peptides in the presence of ATP and magnesium. alpha-casein is the usual test substrate. In the absence of ATP, only oligopeptides shorter than five residues are hydrolyzed (such as succinyl-Leu-Tyr-|-NHMec, and Leu-Tyr-Leu-|-Tyr-Trp, in which cleavage of the -Tyr-|-Leu- and -Tyr-|-Trp bonds also occurs).. Functionally, cleaves peptides in various proteins in a process that requires ATP hydrolysis. Has a chymotrypsin-like activity. Plays a major role in the degradation of misfolded proteins. Probably partially responsible for degradation of ECF sigma factor SigR prime. The chain is ATP-dependent Clp protease proteolytic subunit 2 from Streptomyces coelicolor (strain ATCC BAA-471 / A3(2) / M145).